Reading from the N-terminus, the 225-residue chain is NAD(P)H-quinone oxidoreductase subunit K, chloroplastic (225 aa).

[4Fe-4S] cluster-binding residues include Cys-43, Cys-44, Cys-108, and Cys-139.

This sequence belongs to the complex I 20 kDa subunit family. As to quaternary structure, NDH is composed of at least 16 different subunits, 5 of which are encoded in the nucleus. Requires [4Fe-4S] cluster as cofactor.

Its subcellular location is the plastid. It localises to the chloroplast thylakoid membrane. The catalysed reaction is a plastoquinone + NADH + (n+1) H(+)(in) = a plastoquinol + NAD(+) + n H(+)(out). It carries out the reaction a plastoquinone + NADPH + (n+1) H(+)(in) = a plastoquinol + NADP(+) + n H(+)(out). Functionally, NDH shuttles electrons from NAD(P)H:plastoquinone, via FMN and iron-sulfur (Fe-S) centers, to quinones in the photosynthetic chain and possibly in a chloroplast respiratory chain. The immediate electron acceptor for the enzyme in this species is believed to be plastoquinone. Couples the redox reaction to proton translocation, and thus conserves the redox energy in a proton gradient. The sequence is that of NAD(P)H-quinone oxidoreductase subunit K, chloroplastic from Illicium oligandrum (Star anise).